The primary structure comprises 895 residues: MSAETPITLNIDPQDLQVQTFTVEKLLEPLIIQVTTLVNCPQNPSSRKKGRSKRASVLLASVEEATWNLLDKGEKIAQEATVLKDELTASLEEVRKESEALKVSAERFTDDPCFLPKREAVVQAARALLAAVTRLLILADMIDVMCLLQHVSAFQRTFESLKNVANKSDLQKTYQKLGKELENLDYLAFKRQQDLKSPNQRDEIAGARASLKENSPLLHSICSACLEHSDVASLKASKDTVCEEIQNALNVISNASQGIQNMTTPPEPQAATLGSALDELENLIVLNPLTVTEEEIRPSLEKRLEAIISGAALLADSSCTRDLHRERIIAECNAIRQALQDLLSEYMNNAGKKERSNTLNIALDNMCKKTRDLRRQLRKAIIDHVSDSFLDTTVPLLVLIEAAKNGREKEIKEYAAIFHEHTSRLVEVANLACSMSTNEDGIKIVKIAANHLETLCPQIINAALALAARPKSQAVKNTMEMYKRTWENHIHVLTEAVDDITSIDDFLAVSESHILEDVNKCIIALRDQDADNLDRAAGAIRGRAARVAHIVTGEMDSYEPGAYTEGVMRNVNFLTSTVIPEFVTQVNVALEALSKSSLNVLDDNQFVDISKKIYDTIHDIRCSVMMIRTPEELEDVSDLEEEHEVRSHTSIQTEGKTDRAKMTQLPEAEKEKIAEQVADFKKVKSKLDAEIEIWDDTSNDIIVLAKNMCMIMMEMTDFTRGKGPLKHTTDVIYAAKMISESGSRMDVLARQIANQCPDPSCKQDLLAYLEQIKFYSHQLKICSQVKAEIQNLGGELIMSALDSVTSLIQAAKNLMNAVVQTVKMSYIASTKIIRIQSPAGPRHPVVMWRMKAPAKKPLIKREKPEETCAAVRRGSAKKKIHPLQVMSEFRGRQIY.

Phosphoserine is present on Ser-56. Residues 74–111 (EKIAQEATVLKDELTASLEEVRKESEALKVSAERFTDD) are a coiled coil. At Ser-160 the chain carries Phosphoserine. The stretch at 325–379 (RERIIAECNAIRQALQDLLSEYMNNAGKKERSNTLNIALDNMCKKTRDLRRQLRK) forms a coiled coil. A phosphoserine mark is found at Ser-637 and Ser-647. Thr-649 carries the post-translational modification Phosphothreonine.

The protein belongs to the vinculin/alpha-catenin family. As to quaternary structure, interacts with CTNNB1. Interacts with PKP2. Predominantly expressed in heart and testis. Expressed at lower levels in brain, kidney, liver and skeletal muscle.

It localises to the cytoplasm. The protein localises to the cytoskeleton. It is found in the cell junction. Its subcellular location is the desmosome. In terms of biological role, may be involved in formation of stretch-resistant cell-cell adhesion complexes. The chain is Catenin alpha-3 from Homo sapiens (Human).